A 386-amino-acid polypeptide reads, in one-letter code: WD repeat-containing protein 89 (386 aa).

WD repeat units follow at residues 21–65 (KEPT…LLRE), 68–107 (GSPG…EKPV), 112–156 (GYPS…QDLS), 167–207 (THSD…EEDA), 213–253 (NSVS…TDEP), and 318–357 (GHAA…KTFT).

This chain is WD repeat-containing protein 89 (Wdr89), found in Mus musculus (Mouse).